Reading from the N-terminus, the 377-residue chain is Homoserine O-acetyltransferase (377 aa).

Positions 48 to 347 (NVVLIEHALT…PVGHDAFLTE (300 aa)) constitute an AB hydrolase-1 domain. The active-site Nucleophile is the Ser143. Arg213 contacts substrate. Residues Asp311 and His341 contribute to the active site. Asp342 contacts substrate.

This sequence belongs to the AB hydrolase superfamily. MetX family. As to quaternary structure, homodimer.

Its subcellular location is the cytoplasm. The enzyme catalyses L-homoserine + acetyl-CoA = O-acetyl-L-homoserine + CoA. The protein operates within amino-acid biosynthesis; L-methionine biosynthesis via de novo pathway; O-acetyl-L-homoserine from L-homoserine: step 1/1. Its function is as follows. Transfers an acetyl group from acetyl-CoA to L-homoserine, forming acetyl-L-homoserine. This chain is Homoserine O-acetyltransferase, found in Corynebacterium efficiens (strain DSM 44549 / YS-314 / AJ 12310 / JCM 11189 / NBRC 100395).